The primary structure comprises 391 residues: Phosphatidate cytidylyltransferase 4, chloroplastic (391 aa).

The N-terminal 61 residues, 1–61, are a transit peptide targeting the chloroplast; it reads MATFAELVLS…SVSRRFLTAV (61 aa). The next 6 membrane-spanning stretches (helical) occupy residues 102-122, 175-195, 202-222, 254-274, 298-318, and 321-341; these read IFGI…GWVF, FGNI…ALLV, FAQL…PSFW, VGLV…TFAF, IVGL…LSWP, and LFSS…GDLT.

Belongs to the CDS family. Requires Mg(2+) as cofactor.

The protein localises to the plastid. The protein resides in the chloroplast membrane. The catalysed reaction is a 1,2-diacyl-sn-glycero-3-phosphate + CTP + H(+) = a CDP-1,2-diacyl-sn-glycerol + diphosphate. The protein operates within phospholipid metabolism; CDP-diacylglycerol biosynthesis; CDP-diacylglycerol from sn-glycerol 3-phosphate: step 3/3. Highest activities is obtained at about 30 mM CTP and 2 mM phosphatidic acid (PA). Its function is as follows. May be involved in the synthesis of minor phospholipids and in modulation of IP3-mediated signal transduction. Promotes the biosynthesis of plastidial phosphatidylglycerol (PG) which is required for structure and function of thylakoid membranes and, hence, for photoautotrophic growth. This is Phosphatidate cytidylyltransferase 4, chloroplastic from Arabidopsis thaliana (Mouse-ear cress).